Consider the following 149-residue polypeptide: Tetracenomycin polyketide synthase protein TcmJ (149 aa).

The Cupin type-2 domain occupies 51-117; sequence HIELAPGESV…NRGNVPARVV (67 aa). A disordered region spans residues 127–149; sequence PELGHVDTEPVPNPAAAPPKVGG.

As to quaternary structure, the tetracenomycin polyketide synthase (TCM PKS) is composed of a ketosynthase complex (TcmKL), an acyl carrier protein (TcmM), a cyclase (TcmN) and a probable second cyclase (TcmJ).

It carries out the reaction 10 malonyl-CoA + 8 H(+) = tetracenomycin F2 + 10 CO2 + 10 CoA + 2 H2O. Its pathway is antibiotic biosynthesis; tetracenomycin C biosynthesis. Its function is as follows. Involved in the biosynthesis of tetracenomycin C (TCM C). Part of a type II polyketide synthase (PKS) that catalyzes the synthesis of tetracenomycin F2 (TCM F2), a precursor of TCM C, from malonyl-CoA. TcmJ, while not absolutely required, greatly increases the tetracenomycin F2 production. It probably acts as a cyclase. In Streptomyces glaucescens, this protein is Tetracenomycin polyketide synthase protein TcmJ.